The following is an 84-amino-acid chain: Small ribosomal subunit protein eS27z (84 aa).

The segment at 39 to 61 adopts a C4-type zinc-finger fold; it reads CQGCFNITTVFSHSQTVVMCGNC.

Belongs to the eukaryotic ribosomal protein eS27 family. (Microbial infection) May interact with Tomato yellow leaf curl virus (TYLCV) and papaya leaf curl China virus (PaLcuCNV) C2 proteins. This interaction prevents activation of Jasmonate signaling, thereby facilitating viral uptake by insects vectors. It depends on Zn(2+) as a cofactor.

This Arabidopsis thaliana (Mouse-ear cress) protein is Small ribosomal subunit protein eS27z (RPS27A).